We begin with the raw amino-acid sequence, 391 residues long: Succinate--CoA ligase [ADP-forming] subunit beta (391 aa).

The region spanning 9 to 246 is the ATP-grasp domain; that stretch reads KHLFADYDIP…ITQEDEAEVQ (238 aa). ATP contacts are provided by residues Lys46, 53-55, Glu99, Leu102, and Glu107; that span reads GRG. Mg(2+) contacts are provided by Asn199 and Asp213. Substrate contacts are provided by residues Asn266 and 323-325; that span reads GIV.

It belongs to the succinate/malate CoA ligase beta subunit family. As to quaternary structure, heterotetramer of two alpha and two beta subunits. Requires Mg(2+) as cofactor.

The catalysed reaction is succinate + ATP + CoA = succinyl-CoA + ADP + phosphate. It catalyses the reaction GTP + succinate + CoA = succinyl-CoA + GDP + phosphate. Its pathway is carbohydrate metabolism; tricarboxylic acid cycle; succinate from succinyl-CoA (ligase route): step 1/1. In terms of biological role, succinyl-CoA synthetase functions in the citric acid cycle (TCA), coupling the hydrolysis of succinyl-CoA to the synthesis of either ATP or GTP and thus represents the only step of substrate-level phosphorylation in the TCA. The beta subunit provides nucleotide specificity of the enzyme and binds the substrate succinate, while the binding sites for coenzyme A and phosphate are found in the alpha subunit. This Alkalilimnicola ehrlichii (strain ATCC BAA-1101 / DSM 17681 / MLHE-1) protein is Succinate--CoA ligase [ADP-forming] subunit beta.